Consider the following 74-residue polypeptide: UPF0235 protein tsr1994 (74 aa).

It belongs to the UPF0235 family.

This Thermosynechococcus vestitus (strain NIES-2133 / IAM M-273 / BP-1) protein is UPF0235 protein tsr1994.